A 1058-amino-acid polypeptide reads, in one-letter code: Carbamoyl phosphate synthase large chain (1058 aa).

Positions 1–401 (MPKRTDIQKI…SLLKACRSLE (401 aa)) are carboxyphosphate synthetic domain. Arg-129, Arg-169, Gly-175, Gly-176, Arg-208, Ile-210, Glu-215, Gly-241, Ile-242, His-243, Gln-284, and Glu-298 together coordinate ATP. Residues 133-327 (KQLMEELEQP…IAKLAAKIAV (195 aa)) form the ATP-grasp 1 domain. Mg(2+)-binding residues include Gln-284, Glu-298, and Asn-300. Mn(2+)-binding residues include Gln-284, Glu-298, and Asn-300. The oligomerization domain stretch occupies residues 402–546 (IGVHHNEIPE…YSTYGWENES (145 aa)). The carbamoyl phosphate synthetic domain stretch occupies residues 547 to 929 (IRSDKESVLV…ALYKAFEASY (383 aa)). The 191-residue stretch at 671 to 861 (EQALKELDIP…MAQVATKLIL (191 aa)) folds into the ATP-grasp 2 domain. ATP contacts are provided by Arg-707, Ser-746, Ile-748, Glu-752, Gly-777, Val-778, His-779, Ser-780, Gln-820, and Glu-832. The Mg(2+) site is built by Gln-820, Glu-832, and Asn-834. Positions 820, 832, and 834 each coordinate Mn(2+). The MGS-like domain maps to 930 to 1058 (LHLPTFGNVV…ESRSFVTEAI (129 aa)). Positions 930–1058 (LHLPTFGNVV…ESRSFVTEAI (129 aa)) are allosteric domain.

This sequence belongs to the CarB family. In terms of assembly, composed of two chains; the small (or glutamine) chain promotes the hydrolysis of glutamine to ammonia, which is used by the large (or ammonia) chain to synthesize carbamoyl phosphate. Tetramer of heterodimers (alpha,beta)4. The cofactor is Mg(2+). Mn(2+) serves as cofactor.

The catalysed reaction is hydrogencarbonate + L-glutamine + 2 ATP + H2O = carbamoyl phosphate + L-glutamate + 2 ADP + phosphate + 2 H(+). The enzyme catalyses hydrogencarbonate + NH4(+) + 2 ATP = carbamoyl phosphate + 2 ADP + phosphate + 2 H(+). The protein operates within amino-acid biosynthesis; L-arginine biosynthesis; carbamoyl phosphate from bicarbonate: step 1/1. It participates in pyrimidine metabolism; UMP biosynthesis via de novo pathway; (S)-dihydroorotate from bicarbonate: step 1/3. Functionally, large subunit of the glutamine-dependent carbamoyl phosphate synthetase (CPSase). CPSase catalyzes the formation of carbamoyl phosphate from the ammonia moiety of glutamine, carbonate, and phosphate donated by ATP, constituting the first step of 2 biosynthetic pathways, one leading to arginine and/or urea and the other to pyrimidine nucleotides. The large subunit (synthetase) binds the substrates ammonia (free or transferred from glutamine from the small subunit), hydrogencarbonate and ATP and carries out an ATP-coupled ligase reaction, activating hydrogencarbonate by forming carboxy phosphate which reacts with ammonia to form carbamoyl phosphate. The chain is Carbamoyl phosphate synthase large chain from Streptococcus pneumoniae (strain P1031).